The chain runs to 187 residues: UPF0398 protein SAB1311c (187 aa).

This sequence belongs to the UPF0398 family.

This chain is UPF0398 protein SAB1311c, found in Staphylococcus aureus (strain bovine RF122 / ET3-1).